Here is a 151-residue protein sequence, read N- to C-terminus: Probable cellulase Cel12b (151 aa).

Active-site residues include glutamate 50 and glutamate 133.

The protein belongs to the glycosyl hydrolase 12 (cellulase H) family.

Probable cellulase. Can hydrolyze barley beta-glucan in vitro. Could be important for the survival of M.tuberculosis in the environment, perhaps in amoebal hosts. The sequence is that of Probable cellulase Cel12b from Mycobacterium tuberculosis (strain ATCC 25618 / H37Rv).